The primary structure comprises 349 residues: Dehydrogenase FPY6 (349 aa).

Belongs to the Gfo/Idh/MocA family.

Its pathway is secondary metabolite biosynthesis. Its function is as follows. Dehydrogenase; part of the gene cluster that mediates the biosynthesis of the gamma-pyrones fusapyrone (FPY) and deoxyfusapyrone (dFPY). FPY is an undecaketide and thus likely synthesized by the polyketide synthase FPY1 from acetyl-CoA functioning as starter unit and the addition of 10 malonyl-CoA extender units by successive Claisen-condensations. Next to this, FPY shares some rare features: C-glycosylated 4-deoxyglucose at C-3, a gem-dimethyl group at C-13, and an alpha-beta to beta-gamma double bond shift at C-20. During FPY biosynthesis mono-C-methyl groups are transferred to the tetra-, penta-, hexa- and heptaketide, while two C-methyl groups are transferred to the nonaketide, suggesting that the CMet domain is programmed to selectively catalyze two successive C-alpha-methylation reactions of the nonaketide, while other alpha-carbons are non- or mono-methylated only. While the origin of the 4'-deoxyglucose moiety remains opaque, its transfer to C-3 is most likely mediated by the C-glycosyltransferase FPY2. Next to this, the hydroxyl group present at C-33 and discriminating between FPY and dFPY, is likely to be installed by the cytochrome P450 monooxygenase FPY7. No putative function can be predicted for the remaining genes FPY3-FPY6. The protein is Dehydrogenase FPY6 of Fusarium mangiferae (Mango malformation disease fungus).